Consider the following 134-residue polypeptide: Profilin-3 (134 aa).

Cysteines 13 and 118 form a disulfide. Residues 84–100 (AVIRGKKGSGGITIKKT) carry the Involved in PIP2 interaction motif. Thr-114 carries the phosphothreonine modification.

It belongs to the profilin family. Occurs in many kinds of cells as a complex with monomeric actin in a 1:1 ratio. Post-translationally, phosphorylated by MAP kinases.

The protein resides in the cytoplasm. It localises to the cytoskeleton. Its function is as follows. Binds to actin and affects the structure of the cytoskeleton. At high concentrations, profilin prevents the polymerization of actin, whereas it enhances it at low concentrations. The protein is Profilin-3 of Olea europaea (Common olive).